Consider the following 121-residue polypeptide: Large ribosomal subunit protein uL14c (121 aa).

This sequence belongs to the universal ribosomal protein uL14 family. As to quaternary structure, part of the 50S ribosomal subunit.

It localises to the plastid. The protein localises to the organellar chromatophore. Binds to 23S rRNA. The protein is Large ribosomal subunit protein uL14c of Paulinella chromatophora.